Reading from the N-terminus, the 821-residue chain is Tip elongation aberrant protein Tea4 (821 aa).

Composition is skewed to polar residues over residues 1–11 (MLHMNSASSAD) and 21–31 (DPTQQNDSTII). Residues 1 to 36 (MLHMNSASSADSMEIMESHFDPTQQNDSTIIESRYS) form a disordered region. At Y35 the chain carries Phosphotyrosine. Phosphoserine is present on S36. Y40 carries the post-translational modification Phosphotyrosine. Residues 51–79 (ISGENSEPQTVASQEISDSQEEDTTLTSS) are disordered. A compositionally biased stretch (polar residues) spans 53-67 (GENSEPQTVASQEIS). The SH3 domain occupies 130–191 (IDCNFVHAIR…PAEYIETPSE (62 aa)). Disordered regions lie at residues 267–292 (LEIE…DHVT), 333–352 (SSTT…FSSA), 473–500 (DSFD…MPNN), 529–570 (SPRL…SSLL), and 664–697 (DASS…SFSS). Positions 268–282 (EIEFSDSSDSSLSAE) are enriched in low complexity. The segment covering 283-292 (YRSESEDHVT) has biased composition (basic and acidic residues). Composition is skewed to polar residues over residues 333–350 (SSTT…SKFS) and 473–484 (DSFDTSNVTQDA). An interaction with tea1 region spans residues 527–821 (LLSPRLYSSS…EMASLLNTNR (295 aa)). Residues 529-541 (SPRLYSSSTPSSP) show a composition bias toward low complexity. The segment covering 554–563 (ENRKQADKVE) has biased composition (basic and acidic residues). An interaction with win1 region spans residues 599–821 (KAFSQSSIDL…EMASLLNTNR (223 aa)). A compositionally biased stretch (low complexity) spans 665–674 (ASSAIPSSSI). Residues 675 to 687 (SHDEDLLPRKNTE) are compositionally biased toward basic and acidic residues.

An essential component of the tea1 cell-end complex. Interacts with win1, tea1 and for3. Interacts with tip1 in the presence of tea1.

The protein resides in the cytoplasm. It localises to the cytoskeleton. Cell polarity factor essential for the bipolar localization and function of structures containing the cell-end marker tea1 during the normal cell cycle. Regulates cell polarity in complex with tea1 and together with the stress signaling MAPK cascade, contributes to cell polarity maintenance under stress conditions. Required for the localization of for3 at the cell tip specifically during initiation of bipolar growth. During the new end take off (NETO), formation of a protein complex that includes tea1, tea4 and for3 is necessary and sufficient for the establishment of cell polarity and localized actin assembly at new cell ends. The chain is Tip elongation aberrant protein Tea4 from Schizosaccharomyces pombe (strain 972 / ATCC 24843) (Fission yeast).